The following is a 255-amino-acid chain: ATP-dependent L-serine kinase (255 aa).

Glu36 is an active-site residue. Val74 contacts O-phospho-L-serine. Asp75 contacts Mg(2+). Gly76, His77, His78, Trp108, Lys234, Thr236, and His238 together coordinate O-phospho-L-serine.

The protein belongs to the SerK family. Mg(2+) serves as cofactor.

It catalyses the reaction L-serine + ATP = O-phospho-L-serine + ADP + H(+). Its function is as follows. Free serine kinase that uses ATP to phosphorylate L-serine to yield O-phospho-L-serine and ADP. The sequence is that of ATP-dependent L-serine kinase from Desulfurococcus mucosus (strain ATCC 35584 / DSM 2162 / JCM 9187 / O7/1).